The following is a 325-amino-acid chain: MKLRVAVIYGGRTGEHEVSVRSAKSILAGLDCEKYETIEYFIDQNGKWSPGPILPEPGAHANIDVVFPVLHGTFGEDGTVQGLLELADLPYVGAGVLGSAVSMDKEMMKRVCKERMLPIVDYVTVTRQTPSIVDACRRLPFPMFVKPANLGSSVGISKAHDEQELEAAFSLAKQYDRKIIVERGIEGRELECSVLGNEAPMASLPCEILPSREFYDYEDKYLLDMARTQVPADLPGERTDEIRRLAVECYRAVECEGMARVDFFLEHGTNRLYINEINTIPGFTSISMYPKMWEHSGIPFCTLLDQLIEFALDRHRQKQVTRFAR.

Positions 109-309 (KRVCKERMLP…FCTLLDQLIE (201 aa)) constitute an ATP-grasp domain. ATP is bound at residue 136–191 (CRRLPFPMFVKPANLGSSVGISKAHDEQELEAAFSLAKQYDRKIIVERGIEGRELE). Mg(2+) contacts are provided by Asp262, Glu276, and Asn278.

It belongs to the D-alanine--D-alanine ligase family. Mg(2+) is required as a cofactor. Requires Mn(2+) as cofactor.

The protein resides in the cytoplasm. It carries out the reaction 2 D-alanine + ATP = D-alanyl-D-alanine + ADP + phosphate + H(+). It functions in the pathway cell wall biogenesis; peptidoglycan biosynthesis. Cell wall formation. This is D-alanine--D-alanine ligase from Solibacter usitatus (strain Ellin6076).